A 236-amino-acid chain; its full sequence is uncharacterized protein (236 aa).

One can recognise a GP-PDE domain in the interval 4–236 (QFLIAYRGYS…VKFQITAQIY (233 aa)).

It to glycerophosphoryl diester phosphodiesterases (EC 3.1.4.46). To M.genitalium MG293.

This is an uncharacterized protein from Mycoplasma genitalium (strain ATCC 33530 / DSM 19775 / NCTC 10195 / G37) (Mycoplasmoides genitalium).